Consider the following 404-residue polypeptide: Cysteine desulfurase IscS (404 aa).

Residues 75-76, asparagine 155, glutamine 183, and 203-205 contribute to the pyridoxal 5'-phosphate site; these read AT and SAH. Lysine 206 carries the post-translational modification N6-(pyridoxal phosphate)lysine. Threonine 243 is a binding site for pyridoxal 5'-phosphate. Catalysis depends on cysteine 328, which acts as the Cysteine persulfide intermediate. Cysteine 328 lines the [2Fe-2S] cluster pocket.

The protein belongs to the class-V pyridoxal-phosphate-dependent aminotransferase family. NifS/IscS subfamily. Homodimer. Forms a heterotetramer with IscU, interacts with other sulfur acceptors. Pyridoxal 5'-phosphate is required as a cofactor.

It localises to the cytoplasm. The enzyme catalyses (sulfur carrier)-H + L-cysteine = (sulfur carrier)-SH + L-alanine. Its pathway is cofactor biosynthesis; iron-sulfur cluster biosynthesis. Master enzyme that delivers sulfur to a number of partners involved in Fe-S cluster assembly, tRNA modification or cofactor biosynthesis. Catalyzes the removal of elemental sulfur atoms from cysteine to produce alanine. Functions as a sulfur delivery protein for Fe-S cluster synthesis onto IscU, an Fe-S scaffold assembly protein, as well as other S acceptor proteins. The sequence is that of Cysteine desulfurase IscS from Buchnera aphidicola subsp. Baizongia pistaciae (strain Bp).